The chain runs to 170 residues: Helix-loop-helix protein 3 (170 aa).

Residues 1 to 26 show a composition bias toward low complexity; sequence MTASTSSTPSTSTKIPSSSKSSVTKQ. Disordered regions lie at residues 1 to 42 and 118 to 170; these read MTAS…VDQV and TPSP…TETY. The interval 26–39 is basic motif; degenerate; it reads QTKQKRNERERKRV. In terms of domain architecture, bHLH spans 26–79; the sequence is QTKQKRNERERKRVDQVNQGFVLLQERVPKAAGNKAKLSKVETLREAARYIQEL. Residues 30–40 are compositionally biased toward basic and acidic residues; that stretch reads KRNERERKRVD. The segment at 40–79 is helix-loop-helix motif; it reads DQVNQGFVLLQERVPKAAGNKAKLSKVETLREAARYIQEL. Low complexity predominate over residues 143-157; sequence SHYYQESSSSSASTS.

As to quaternary structure, efficient DNA binding requires dimerization with another bHLH protein. Forms a heterodimer with hlh-2. As to expression, expressed in the ADL sensory neurons.

Its subcellular location is the nucleus. In terms of biological role, probable transcriptional regulator. May mediate transcriptional activation by binding to the E-box motif 5'-CANNTG-3'. Plays a role in the differentiation of the hermaphrodite-specific motor neurons (HSN) that are required for normal egg laying. Might play a role in serotonin production by regulating expression of the tryptophan hydrolase tph-1 which catalyzes serotonin synthesis, in the HSN neurons. Also plays a role in HSN axon guidance towards the vulva and the ventral nerve cord, possibly by promoting the expression of the netrin receptor unc-40. Under feeding conditions, involved in the regulation of the srh-234 chemoreceptor encoding gene expression in the ADL sensory neurons. Together with hlh-2, involved in the induction of programmed cell death in the sister cells of the serotonergic neurosecretory motor (NSM) neurons, probably through the activation of egl-1 transcription. The sequence is that of Helix-loop-helix protein 3 from Caenorhabditis elegans.